The sequence spans 97 residues: Integration host factor subunit beta (97 aa).

The protein belongs to the bacterial histone-like protein family. Heterodimer of an alpha and a beta chain.

In terms of biological role, this protein is one of the two subunits of integration host factor, a specific DNA-binding protein that functions in genetic recombination as well as in transcriptional and translational control. This is Integration host factor subunit beta from Buchnera aphidicola subsp. Cinara cedri (strain Cc).